Reading from the N-terminus, the 942-residue chain is Protein inturned (942 aa).

The interval 1–52 (MASVASCDSRPSSDELPGDPSSQEEDEDYDFEDRVSDSGSYSSASSDYDDLE) is disordered. The span at 22 to 31 (SQEEDEDYDF) shows a compositional bias: acidic residues. Residues 37–46 (DSGSYSSASS) show a composition bias toward low complexity. Residues 185–263 (LVGIIHQTKW…PMQVKLTFEN (79 aa)) enclose the PDZ domain. A phosphoserine mark is found at serine 670 and serine 674. The disordered stretch occupies residues 704 to 754 (TRKPSPSCSSGGSDNGCEGGEDDGFSPHTTPDAVRKQRESQGSDGLEESGT).

It belongs to the inturned family. Component of the CPLANE (ciliogenesis and planar polarity effectors) complex, composed of INTU, FUZ and WDPCP. Interacts with CPLANE1. Interacts with NPHP4 and DAAM1; INTU is mediating the interaction between NPHP4 and DAAM1.

It localises to the cytoplasm. The protein resides in the cell surface. The protein localises to the cytoskeleton. It is found in the cilium basal body. Its subcellular location is the microtubule organizing center. It localises to the centrosome. The protein resides in the centriole. Plays a key role in ciliogenesis and embryonic development. Regulator of cilia formation by controlling the organization of the apical actin cytoskeleton and the positioning of the basal bodies at the apical cell surface, which in turn is essential for the normal orientation of elongating ciliary microtubules. Plays a key role in definition of cell polarity via its role in ciliogenesis but not via conversion extension. Has an indirect effect on hedgehog signaling. Proposed to function as core component of the CPLANE (ciliogenesis and planar polarity effectors) complex involved in the recruitment of peripheral IFT-A proteins to basal bodies. Required for recruitment of CPLANE2 to the mother centriole. Binds phosphatidylinositol 3-phosphate with highest affinity, followed by phosphatidylinositol 4-phosphate and phosphatidylinositol 5-phosphate. This chain is Protein inturned (INTU), found in Homo sapiens (Human).